The chain runs to 152 residues: Ribosomal RNA large subunit methyltransferase H (152 aa).

S-adenosyl-L-methionine is bound by residues L70, G102, and 120-125; that span reads LSPMTF.

This sequence belongs to the RNA methyltransferase RlmH family. As to quaternary structure, homodimer.

The protein localises to the cytoplasm. The enzyme catalyses pseudouridine(1915) in 23S rRNA + S-adenosyl-L-methionine = N(3)-methylpseudouridine(1915) in 23S rRNA + S-adenosyl-L-homocysteine + H(+). Functionally, specifically methylates the pseudouridine at position 1915 (m3Psi1915) in 23S rRNA. This chain is Ribosomal RNA large subunit methyltransferase H, found in Pelobacter propionicus (strain DSM 2379 / NBRC 103807 / OttBd1).